Reading from the N-terminus, the 599-residue chain is Elongation factor 4 (599 aa).

In terms of domain architecture, tr-type G spans 2–184; sequence KHIRNFSIIA…RLVRDIPPPE (183 aa). GTP-binding positions include 14–19 and 131–134; these read DHGKST and NKID.

It belongs to the TRAFAC class translation factor GTPase superfamily. Classic translation factor GTPase family. LepA subfamily.

The protein localises to the cell inner membrane. The enzyme catalyses GTP + H2O = GDP + phosphate + H(+). Required for accurate and efficient protein synthesis under certain stress conditions. May act as a fidelity factor of the translation reaction, by catalyzing a one-codon backward translocation of tRNAs on improperly translocated ribosomes. Back-translocation proceeds from a post-translocation (POST) complex to a pre-translocation (PRE) complex, thus giving elongation factor G a second chance to translocate the tRNAs correctly. Binds to ribosomes in a GTP-dependent manner. The sequence is that of Elongation factor 4 from Pectobacterium carotovorum subsp. carotovorum (strain PC1).